A 523-amino-acid polypeptide reads, in one-letter code: Galactarate dehydratase (L-threo-forming) (523 aa).

Belongs to the UxaA family. Homodimer. Requires Fe(2+) as cofactor.

The catalysed reaction is galactarate = 5-dehydro-4-deoxy-D-glucarate + H2O. It participates in carbohydrate acid metabolism; galactarate degradation; D-glycerate from galactarate: step 1/3. Its function is as follows. Catalyzes the dehydration of galactarate to form 5-dehydro-4-deoxy-D-glucarate (5-KDG). The polypeptide is Galactarate dehydratase (L-threo-forming) (Escherichia coli (strain K12)).